The following is a 225-amino-acid chain: Small ribosomal subunit protein uS3 (225 aa).

The KH type-2 domain maps to 39 to 109; the sequence is IYRFFNKFTR…ELKLNIEVVN (71 aa).

Belongs to the universal ribosomal protein uS3 family. As to quaternary structure, part of the 30S ribosomal subunit. Forms a tight complex with proteins S10 and S14.

Binds the lower part of the 30S subunit head. Binds mRNA in the 70S ribosome, positioning it for translation. The chain is Small ribosomal subunit protein uS3 from Mycoplasma mobile (strain ATCC 43663 / 163K / NCTC 11711) (Mesomycoplasma mobile).